The primary structure comprises 99 residues: uncharacterized protein (99 aa).

Positions 50–77 (SAHWEDARSSGGTSPIRARAGSEGRGCQ) are disordered.

This is an uncharacterized protein from Homo sapiens (Human).